The chain runs to 366 residues: 3-dehydroquinate synthase (366 aa).

NAD(+)-binding positions include 69–74, 103–107, 127–128, Lys-140, Lys-149, and 167–170; these read DGEAHK, GVIGD, TT, and TLNT. Glu-182, His-245, and His-262 together coordinate Zn(2+).

The protein belongs to the sugar phosphate cyclases superfamily. Dehydroquinate synthase family. Requires Co(2+) as cofactor. Zn(2+) is required as a cofactor. It depends on NAD(+) as a cofactor.

The protein resides in the cytoplasm. It carries out the reaction 7-phospho-2-dehydro-3-deoxy-D-arabino-heptonate = 3-dehydroquinate + phosphate. The protein operates within metabolic intermediate biosynthesis; chorismate biosynthesis; chorismate from D-erythrose 4-phosphate and phosphoenolpyruvate: step 2/7. In terms of biological role, catalyzes the conversion of 3-deoxy-D-arabino-heptulosonate 7-phosphate (DAHP) to dehydroquinate (DHQ). The protein is 3-dehydroquinate synthase of Pseudomonas fluorescens (strain SBW25).